The primary structure comprises 447 residues: Biotin carboxylase (447 aa).

Residues 1 to 447 (MKFDKILIAN…STSFVQEMNK (447 aa)) form the Biotin carboxylation domain. ATP-binding positions include Lys117, Lys159, 165 to 166 (GG), 201 to 204 (EKFI), and His209. Residues 121-318 (KETMQKAGVP…LLVEQIRIAQ (198 aa)) enclose the ATP-grasp domain. Residue Lys238 coordinates hydrogencarbonate. 2 residues coordinate ATP: Glu276 and Glu289. Mg(2+)-binding residues include Glu276, Glu289, and Asn291. Glu276, Glu289, and Asn291 together coordinate Mn(2+). Hydrogencarbonate contacts are provided by Arg293, Val296, and Arg339. Arg293 is an active-site residue. Residue Arg339 participates in biotin binding.

Acetyl-CoA carboxylase is a heterohexamer of biotin carboxyl carrier protein, biotin carboxylase and the two subunits of carboxyl transferase in a 2:2 complex. Requires Mg(2+) as cofactor. The cofactor is Mn(2+).

The catalysed reaction is N(6)-biotinyl-L-lysyl-[protein] + hydrogencarbonate + ATP = N(6)-carboxybiotinyl-L-lysyl-[protein] + ADP + phosphate + H(+). It functions in the pathway lipid metabolism; malonyl-CoA biosynthesis; malonyl-CoA from acetyl-CoA: step 1/1. Its function is as follows. This protein is a component of the acetyl coenzyme A carboxylase complex; first, biotin carboxylase catalyzes the carboxylation of the carrier protein and then the transcarboxylase transfers the carboxyl group to form malonyl-CoA. This chain is Biotin carboxylase (accC), found in Nostoc sp. (strain PCC 7120 / SAG 25.82 / UTEX 2576).